Consider the following 461-residue polypeptide: Ornithine decarboxylase (461 aa).

Lys-69 bears the N6-(pyridoxal phosphate)lysine mark. Residues Ser-200, Gly-237, and 274–277 (EPGR) each bind pyridoxal 5'-phosphate. At Ser-303 the chain carries Phosphoserine; by CK2. 331 to 332 (YD) provides a ligand contact to substrate. The active-site Proton donor; shared with dimeric partner is Cys-360. The residue at position 360 (Cys-360) is an S-nitrosocysteine. Asp-361 is a binding site for substrate. Tyr-389 contributes to the pyridoxal 5'-phosphate binding site.

It belongs to the Orn/Lys/Arg decarboxylase class-II family. In terms of assembly, homodimer. Only the dimer is catalytically active, as the active sites are constructed of residues from both monomers. It depends on pyridoxal 5'-phosphate as a cofactor.

It catalyses the reaction L-ornithine + H(+) = putrescine + CO2. Its pathway is amine and polyamine biosynthesis; putrescine biosynthesis via L-ornithine pathway; putrescine from L-ornithine: step 1/1. Inhibited by antizymes (AZs) OAZ1, OAZ2 and OAZ3 in response to polyamine levels. AZs inhibit the assembly of the functional homodimer by binding to ODC monomers. Additionally, OAZ1 targets ODC monomers for ubiquitin-independent proteolytic destruction by the 26S proteasome. Catalyzes the first and rate-limiting step of polyamine biosynthesis that converts ornithine into putrescine, which is the precursor for the polyamines, spermidine and spermine. Polyamines are essential for cell proliferation and are implicated in cellular processes, ranging from DNA replication to apoptosis. The sequence is that of Ornithine decarboxylase (ODC1) from Bos taurus (Bovine).